A 151-amino-acid chain; its full sequence is Large ribosomal subunit protein bL9 (151 aa).

Belongs to the bacterial ribosomal protein bL9 family.

Binds to the 23S rRNA. In Lacticaseibacillus casei (strain BL23) (Lactobacillus casei), this protein is Large ribosomal subunit protein bL9.